A 294-amino-acid polypeptide reads, in one-letter code: Complement C1q tumor necrosis factor-related protein 2 (294 aa).

Positions 1–24 are cleaved as a signal peptide; the sequence is MTIFKKVTTMISWVLLACALPCAA. The tract at residues 42–156 is disordered; it reads QLVCSLPGPQ…PGPCSCGSSR (115 aa). Positions 48-150 constitute a Collagen-like domain; the sequence is PGPQGPPGPP…KGEPGLPGPC (103 aa). Over residues 50–59 the composition is skewed to pro residues; it reads PQGPPGPPGA. Over residues 75–87 the composition is skewed to basic and acidic residues; it reads DGQDGQDGDRGDS. Positions 105–129 are enriched in low complexity; that stretch reads KGKAGAIGRAGPRGPKGVSGTPGKH. One can recognise a C1q domain in the interval 154–290; it reads SSRAKSAFSV…GFLIYADQGD (137 aa).

As to quaternary structure, may interact with ERFE.

It is found in the secreted. Its function is as follows. Involved in the regulation of lipid metabolism in adipose tissue and liver. The polypeptide is Complement C1q tumor necrosis factor-related protein 2 (C1qtnf2) (Mus musculus (Mouse)).